The primary structure comprises 204 residues: Double homeobox protein A (204 aa).

Positions 15-74 (HRRCRTKFTEEQLKILINTFNQKPYPGYATKQKLALEINTEESRIQIWFQNRRARHGFQK) form a DNA-binding region, homeobox 1. Disordered regions lie at residues 73–101 (QKRP…SREA) and 163–204 (EPVA…ARTW). Polar residues predominate over residues 81 to 90 (LESSQSQGQD). The homeobox 2 DNA-binding region spans 101 to 160 (ARRCRTTYSASQLHTLIKAFMKNPYPGIDSREELAKEIGVPESRVQIWFQNRRSRLLLQR). Residues 184-197 (EDTQNGTNFTSDSH) show a composition bias toward polar residues.

It belongs to the paired homeobox family. In terms of tissue distribution, expressed in embryonic stem cells.

The protein resides in the nucleus. Its function is as follows. Transcription factor that acts as a repressor. This Homo sapiens (Human) protein is Double homeobox protein A.